A 210-amino-acid chain; its full sequence is MRPIAIIDYGMGNLLSVQKALDRLGYPVEVTDDPGEITAAPGVILPGVGAFADAMANLQQKGLVAAIREVAERGVPLLGICLGLQLLFSTSEEGGQVAGLDLLPGEVKRLPAGIKVPHMGWNQVRFPRPGALFRGIPGGTDFYFVHSYYIVPREEEVVTGTTEYGLEFAVSIQRGNLFGVQFHPEKSSRRGLEVLKNFGELVRHAGNAGH.

The 206-residue stretch at 3–208 (PIAIIDYGMG…GELVRHAGNA (206 aa)) folds into the Glutamine amidotransferase type-1 domain. C81 (nucleophile) is an active-site residue. Active-site residues include H183 and E185.

In terms of assembly, heterodimer of HisH and HisF.

The protein localises to the cytoplasm. It catalyses the reaction 5-[(5-phospho-1-deoxy-D-ribulos-1-ylimino)methylamino]-1-(5-phospho-beta-D-ribosyl)imidazole-4-carboxamide + L-glutamine = D-erythro-1-(imidazol-4-yl)glycerol 3-phosphate + 5-amino-1-(5-phospho-beta-D-ribosyl)imidazole-4-carboxamide + L-glutamate + H(+). The enzyme catalyses L-glutamine + H2O = L-glutamate + NH4(+). Its pathway is amino-acid biosynthesis; L-histidine biosynthesis; L-histidine from 5-phospho-alpha-D-ribose 1-diphosphate: step 5/9. Functionally, IGPS catalyzes the conversion of PRFAR and glutamine to IGP, AICAR and glutamate. The HisH subunit catalyzes the hydrolysis of glutamine to glutamate and ammonia as part of the synthesis of IGP and AICAR. The resulting ammonia molecule is channeled to the active site of HisF. This chain is Imidazole glycerol phosphate synthase subunit HisH, found in Moorella thermoacetica (strain ATCC 39073 / JCM 9320).